The chain runs to 482 residues: Glycogen synthase (482 aa).

Lys-15 provides a ligand contact to ADP-alpha-D-glucose.

This sequence belongs to the glycosyltransferase 1 family. Bacterial/plant glycogen synthase subfamily.

It carries out the reaction [(1-&gt;4)-alpha-D-glucosyl](n) + ADP-alpha-D-glucose = [(1-&gt;4)-alpha-D-glucosyl](n+1) + ADP + H(+). It participates in glycan biosynthesis; glycogen biosynthesis. Synthesizes alpha-1,4-glucan chains using ADP-glucose. The polypeptide is Glycogen synthase (Hydrogenobaculum sp. (strain Y04AAS1)).